Reading from the N-terminus, the 827-residue chain is MELSRRDFMKANAAVAAAAAAGIVLPVKNVQADDSGIKWDKAPCRFCGTGCSVLVGTKDGRVVATQGDPDAEVNRGLNCIKGYFLSKIMYGADRVQTPLLRMKDGKFHKEGDFTPVSWDQAFSIMAEKVKATLKAKGGNAVGMFSSGQTTIFEGYAKVKLWKAGLRSNTIDPNARHCMASAAVAFLRTFGMDEPMGCYNDIEKTDGFVLWGSNMAEMHPILWSRISDRRLSDNNVKVVVMSTFEHRSFELADTPIIFKPHSDLAILNYIANYIIQNDKVNWDFVNKHTKFKRGETDIGYGLRPEHPLQKAAKNVKNAGKMHDSSFEEFKKIVEPYTLEKAHEISGVPKHQLEALAKMYADPAQKLVSFWTMGFNQHTRGVWVNHMIYNVHLLTGKISTPGCGPFSLTGQPSACGTAREVGTFVHRLPADMVVMNPKHVEICEKAWKLPKGTIPTVPGYAAVMQSRMLKDGKLNFLWQMCTNNMQGGPNINEEIFPGWRNPENFIVVSDPYPSVSAVAADLILPTCMWVEKEGAYGNAERRTQFWYQQVKGPAQSKSDLWQIVEFAKYFKAEEVWNEELMAQMPEYRGKTLYEILYLNGEVDKYQVPTNIPGYLNDEADDFGFYIQKGLFEEYAQFGRGHGHDLADFETYHQARGLRWPVVDGKETLWRYREGFDPYVKAGEDFRFYGYPDGKAIILGVPYESPAESPDEEYDLWLSTGRVLEHWHTGTMTRRVPELHRSFPNNLVWMHPSDAKKRGLRHGDKVKVITRRGEMISHLDTRGRNKCPEGLIFTTFFDAGQLANKLTLDATDPISGETDFKKCAAKVVKA.

A signal peptide (tat-type signal) is located at residues 1 to 32 (MELSRRDFMKANAAVAAAAAAGIVLPVKNVQA). Residues 37–93 (IKWDKAPCRFCGTGCSVLVGTKDGRVVATQGDPDAEVNRGLNCIKGYFLSKIMYGAD) form the 4Fe-4S Mo/W bis-MGD-type domain. Positions 44, 47, 51, and 79 each coordinate [4Fe-4S] cluster. Residues lysine 81, glutamine 148, asparagine 173, cysteine 177, 210–217 (WGSNMAEM), 241–245 (STFEH), methionine 371, glutamine 375, asparagine 481, 507–508 (SD), lysine 530, aspartate 557, and 717–726 (TGRVLEHWHT) contribute to the Mo-bis(molybdopterin guanine dinucleotide) site. Phenylalanine 793 contributes to the substrate binding site. Mo-bis(molybdopterin guanine dinucleotide) is bound by residues asparagine 801 and lysine 818.

This sequence belongs to the prokaryotic molybdopterin-containing oxidoreductase family. NasA/NapA/NarB subfamily. As to quaternary structure, component of the periplasmic nitrate reductase NapAB complex composed of NapA and NapB. It depends on [4Fe-4S] cluster as a cofactor. The cofactor is Mo-bis(molybdopterin guanine dinucleotide). In terms of processing, predicted to be exported by the Tat system. The position of the signal peptide cleavage has not been experimentally proven.

The protein localises to the periplasm. The enzyme catalyses 2 Fe(II)-[cytochrome] + nitrate + 2 H(+) = 2 Fe(III)-[cytochrome] + nitrite + H2O. Catalytic subunit of the periplasmic nitrate reductase complex NapAB. Receives electrons from NapB and catalyzes the reduction of nitrate to nitrite. The protein is Periplasmic nitrate reductase of Haemophilus ducreyi (strain 35000HP / ATCC 700724).